The primary structure comprises 249 residues: Imidazole glycerol phosphate synthase subunit HisF (249 aa).

Catalysis depends on residues Asp-11 and Asp-130.

This sequence belongs to the HisA/HisF family. In terms of assembly, heterodimer of HisH and HisF.

It is found in the cytoplasm. The enzyme catalyses 5-[(5-phospho-1-deoxy-D-ribulos-1-ylimino)methylamino]-1-(5-phospho-beta-D-ribosyl)imidazole-4-carboxamide + L-glutamine = D-erythro-1-(imidazol-4-yl)glycerol 3-phosphate + 5-amino-1-(5-phospho-beta-D-ribosyl)imidazole-4-carboxamide + L-glutamate + H(+). The protein operates within amino-acid biosynthesis; L-histidine biosynthesis; L-histidine from 5-phospho-alpha-D-ribose 1-diphosphate: step 5/9. IGPS catalyzes the conversion of PRFAR and glutamine to IGP, AICAR and glutamate. The HisF subunit catalyzes the cyclization activity that produces IGP and AICAR from PRFAR using the ammonia provided by the HisH subunit. This chain is Imidazole glycerol phosphate synthase subunit HisF, found in Sulfolobus acidocaldarius (strain ATCC 33909 / DSM 639 / JCM 8929 / NBRC 15157 / NCIMB 11770).